The chain runs to 288 residues: ATP synthase gamma chain (288 aa).

This sequence belongs to the ATPase gamma chain family. F-type ATPases have 2 components, CF(1) - the catalytic core - and CF(0) - the membrane proton channel. CF(1) has five subunits: alpha(3), beta(3), gamma(1), delta(1), epsilon(1). CF(0) has three main subunits: a, b and c.

It is found in the cell membrane. Its function is as follows. Produces ATP from ADP in the presence of a proton gradient across the membrane. The gamma chain is believed to be important in regulating ATPase activity and the flow of protons through the CF(0) complex. The protein is ATP synthase gamma chain of Staphylococcus aureus (strain Mu3 / ATCC 700698).